Consider the following 276-residue polypeptide: Probable endonuclease 4 (276 aa).

Zn(2+) contacts are provided by histidine 70, histidine 108, glutamate 143, aspartate 176, histidine 179, histidine 210, aspartate 223, histidine 225, and glutamate 255.

Belongs to the AP endonuclease 2 family. The cofactor is Zn(2+).

The catalysed reaction is Endonucleolytic cleavage to 5'-phosphooligonucleotide end-products.. Endonuclease IV plays a role in DNA repair. It cleaves phosphodiester bonds at apurinic or apyrimidinic (AP) sites, generating a 3'-hydroxyl group and a 5'-terminal sugar phosphate. The chain is Probable endonuclease 4 from Mesomycoplasma hyopneumoniae (strain J / ATCC 25934 / NCTC 10110) (Mycoplasma hyopneumoniae).